The primary structure comprises 261 residues: Neurovirulence factor ICP34.5 (261 aa).

Positions 1 to 17 are enriched in basic residues; that stretch reads MSRRRGPRRRGPRRRPR. The tract at residues 1–19 is required for nucleolar localization; that stretch reads MSRRRGPRRRGPRRRPRPG. Disordered regions lie at residues 1 to 59, 75 to 135, and 145 to 164; these read MSRR…SAPA, DSDD…LALR, and RLSLRRRRPPASPPADAPRG. 4 consecutive repeats follow at residues 3 to 7, 8 to 12, 16 to 23, and 24 to 31; these read RRRGP and PRPGAPAV. Residues 3-12 are 2 X 5 AA tandem repeats of R-R-R-G-P; sequence RRRGPRRRGP. Residues 16–31 form a 2 X 8 AA tandem repeats of P-R-P-G-A-P-A-V region; the sequence is PRPGAPAVPRPGAPAV. Positions 18 to 32 are enriched in pro residues; sequence PGAPAVPRPGAPAVP. Positions 75 to 88 are enriched in acidic residues; sequence DSDDADYAGNDDAE. Residues 101–111 show a composition bias toward low complexity; it reads APEAPHAAPAA. The short motif at 128 to 137 is the Nuclear export signal element; the sequence is LPPHLALRLR. The segment at 163–176 is binding to PP1CA; it reads RGKVCFSPRVQVRH. Residues 163-176 are interaction with host PPP1CA; the sequence is RGKVCFSPRVQVRH. Residues 178 to 261 are important for interferon resistance; that stretch reads VAWETAARLA…AAAGPGRRAV (84 aa). The Bipartite nuclear localization signal signature appears at 188–206; the sequence is RRGSWARERADRDRFRRRV. Residues 206 to 221 are interaction with host EIF2S1/EIF-2ALPHA; sequence VAAAEAVIGPCLEPEA. The segment at 223–261 is disordered; it reads ARARARARAHEDGGPAEEEEAAAAARGSSAAAGPGRRAV. Positions 244 to 261 are enriched in low complexity; the sequence is AAAARGSSAAAGPGRRAV.

It belongs to the PPP1R15 family. In terms of assembly, interacts with host PPP1CA to form a high-molecular-weight complex that dephosphorylates EIF2S1/eIF-2alpha. Interacts with host EIF2S1/eIF-2alpha; this interaction is crucial for the specific dephosphorylation of EIF2S1/eIF-2alpha by PPP1CA.

It is found in the host cytoplasm. It localises to the host nucleus. The protein localises to the host nucleolus. The protein resides in the virion. Functionally, plays essential roles in viral nuclear egress to mediate capsid transit across the nuclear membrane and also in the inhibition of host immune response and integrated stress response (ISR). Facilitates nuclear egress cooperatively with host C1QBP and protein kinase C/PKC to induce lamin A/C phosphorylation and subsequent reorganization. In turn, lamina disassembles and nuclear egress occurs. Recruits the serine/threonine-protein phosphatase PPP1CA/PP1-alpha to dephosphorylate the translation initiation factor EIF2S1/eIF-2alpha, thereby couteracting the host shutoff of protein synthesis involving double-stranded RNA-dependent protein kinase EIF2AK2/PKR. Also down-modulates the host MHC class II proteins cell surface expression. Acts as a neurovirulence factor that has a profound effect on the growth of the virus in central nervous system tissue, probably through its ability to maintain an environment favorable for viral replication. This chain is Neurovirulence factor ICP34.5 (RL1), found in Human herpesvirus 2 (strain HG52) (HHV-2).